The primary structure comprises 287 residues: Nucleotide-binding protein HEAR2885 (287 aa).

8–15 (GISGSGKS) serves as a coordination point for ATP. 57 to 60 (DVRS) contributes to the GTP binding site.

The protein belongs to the RapZ-like family.

Displays ATPase and GTPase activities. In Herminiimonas arsenicoxydans, this protein is Nucleotide-binding protein HEAR2885.